Consider the following 411-residue polypeptide: Eukaryotic initiation factor 4A-III (411 aa).

M1 bears the N-acetylmethionine mark. A2 is modified (N-acetylalanine; in Eukaryotic initiation factor 4A-III, N-terminally processed). A phosphoserine mark is found at S10 and S12. A Glycyl lysine isopeptide (Lys-Gly) (interchain with G-Cter in SUMO2) cross-link involves residue K19. The short motif at 38–66 (PTFDTMGLREDLLRGIYAYGFEKPSAIQQ) is the Q motif element. ATP contacts are provided by residues K60, Q65, and 85 to 90 (GTGKTA). The 171-residue stretch at 69 to 239 (IKQIIKGRDV…NKFMTDPIRI (171 aa)) folds into the Helicase ATP-binding domain. K124 is subject to N6-acetyllysine. A Glycyl lysine isopeptide (Lys-Gly) (interchain with G-Cter in SUMO2) cross-link involves residue K152. At T163 the chain carries Phosphothreonine. The DEAD box motif lies at 187 to 190 (DEAD). K198 and K296 each carry N6-acetyllysine. One can recognise a Helicase C-terminal domain in the interval 250–411 (GIKQFFVAVE…EMPMNVADLI (162 aa)). A Glycyl lysine isopeptide (Lys-Gly) (interchain with G-Cter in SUMO2) cross-link involves residue K314. Position 321 is an N6-acetyllysine (K321). Residues D342 and 367-371 (RSGRY) contribute to the ATP site. Glycyl lysine isopeptide (Lys-Gly) (interchain with G-Cter in SUMO2) cross-links involve residues K374 and K382.

The protein belongs to the DEAD box helicase family. eIF4A subfamily. In terms of assembly, identified in the spliceosome C complex. Core component of the mRNA splicing-dependent exon junction complex (EJC); the core complex contains CASC3, EIF4A3, MAGOH or MAGOHB, and RBM8A. Interacts with CASC3, MAGOH, NXF1, RBM8A and ALYREF/THOC4. Component of the ALYREF/THOC4-EJC-RNA complex; in the complex interacts with MAGOH, RBM8A and THOC4 (via the WXHD motif); these interactions are likely specific to RNA-bound EJC. May interact with NOM1. Interacts with POLDIP3. Interacts with CWC22 and PRPF19 in an RNA-independent manner. Direct interaction with CWC22 is mediated by the helicase C-terminal domain. Full interaction with CWC22 occurs only when EIF4A3 is not part of the EJC and prevents EIF4A3 binding to RNA. Identified in a complex composed of the EJC core, UPF3B and UPF2. The EJC core can also interact with UPF3A (in vitro). Interacts with NCBP3. Interacts with NRDE2. Interacts with DHX34; the interaction is RNA-independent. Ubiquitously expressed.

The protein resides in the nucleus. Its subcellular location is the nucleus speckle. It is found in the cytoplasm. The catalysed reaction is ATP + H2O = ADP + phosphate + H(+). Its activity is regulated as follows. The ATPase activity is increased some 4-fold in the presence of RNA. ATP-dependent RNA helicase. Involved in pre-mRNA splicing as component of the spliceosome. Core component of the splicing-dependent multiprotein exon junction complex (EJC) deposited at splice junctions on mRNAs. The EJC is a dynamic structure consisting of core proteins and several peripheral nuclear and cytoplasmic associated factors that join the complex only transiently either during EJC assembly or during subsequent mRNA metabolism. The EJC marks the position of the exon-exon junction in the mature mRNA for the gene expression machinery and the core components remain bound to spliced mRNAs throughout all stages of mRNA metabolism thereby influencing downstream processes including nuclear mRNA export, subcellular mRNA localization, translation efficiency and nonsense-mediated mRNA decay (NMD). Its RNA-dependent ATPase and RNA-helicase activities are induced by CASC3, but abolished in presence of the MAGOH-RBM8A heterodimer, thereby trapping the ATP-bound EJC core onto spliced mRNA in a stable conformation. The inhibition of ATPase activity by the MAGOH-RBM8A heterodimer increases the RNA-binding affinity of the EJC. Involved in translational enhancement of spliced mRNAs after formation of the 80S ribosome complex. Binds spliced mRNA in sequence-independent manner, 20-24 nucleotides upstream of mRNA exon-exon junctions. Shows higher affinity for single-stranded RNA in an ATP-bound core EJC complex than after the ATP is hydrolyzed. Involved in the splicing modulation of BCL2L1/Bcl-X (and probably other apoptotic genes); specifically inhibits formation of proapoptotic isoforms such as Bcl-X(S); the function is different from the established EJC assembly. Involved in craniofacial development. This is Eukaryotic initiation factor 4A-III (EIF4A3) from Homo sapiens (Human).